A 269-amino-acid chain; its full sequence is 3-methyl-2-oxobutanoate hydroxymethyltransferase (269 aa).

The Mg(2+) site is built by D48 and D87. 3-methyl-2-oxobutanoate-binding positions include 48 to 49, D87, and K116; that span reads DS. E118 serves as a coordination point for Mg(2+). E185 acts as the Proton acceptor in catalysis.

It belongs to the PanB family. As to quaternary structure, homodecamer; pentamer of dimers. It depends on Mg(2+) as a cofactor.

Its subcellular location is the cytoplasm. The catalysed reaction is 3-methyl-2-oxobutanoate + (6R)-5,10-methylene-5,6,7,8-tetrahydrofolate + H2O = 2-dehydropantoate + (6S)-5,6,7,8-tetrahydrofolate. The protein operates within cofactor biosynthesis; (R)-pantothenate biosynthesis; (R)-pantoate from 3-methyl-2-oxobutanoate: step 1/2. Functionally, catalyzes the reversible reaction in which hydroxymethyl group from 5,10-methylenetetrahydrofolate is transferred onto alpha-ketoisovalerate to form ketopantoate. This is 3-methyl-2-oxobutanoate hydroxymethyltransferase from Campylobacter curvus (strain 525.92).